We begin with the raw amino-acid sequence, 231 residues long: Large ribosomal subunit protein uL1 (231 aa).

Belongs to the universal ribosomal protein uL1 family. Part of the 50S ribosomal subunit.

Its function is as follows. Binds directly to 23S rRNA. The L1 stalk is quite mobile in the ribosome, and is involved in E site tRNA release. Protein L1 is also a translational repressor protein, it controls the translation of the L11 operon by binding to its mRNA. This is Large ribosomal subunit protein uL1 from Gluconacetobacter diazotrophicus (strain ATCC 49037 / DSM 5601 / CCUG 37298 / CIP 103539 / LMG 7603 / PAl5).